The chain runs to 125 residues: Fluoride-specific ion channel FluC (125 aa).

4 helical membrane passes run L4–A24, A32–V52, L67–V87, and L100–L120. Residues G75 and T78 each coordinate Na(+).

It belongs to the fluoride channel Fluc/FEX (TC 1.A.43) family.

Its subcellular location is the cell inner membrane. It carries out the reaction fluoride(in) = fluoride(out). Its activity is regulated as follows. Na(+) is not transported, but it plays an essential structural role and its presence is essential for fluoride channel function. In terms of biological role, fluoride-specific ion channel. Important for reducing fluoride concentration in the cell, thus reducing its toxicity. The polypeptide is Fluoride-specific ion channel FluC (Chelativorans sp. (strain BNC1)).